A 65-amino-acid chain; its full sequence is uncharacterized protein (65 aa).

2 consecutive transmembrane segments (helical) span residues 12-31 (IVKW…LIVV) and 41-63 (LVAR…AIIV).

It is found in the cell membrane. This is an uncharacterized protein from Halalkalibacterium halodurans (strain ATCC BAA-125 / DSM 18197 / FERM 7344 / JCM 9153 / C-125) (Bacillus halodurans).